The following is a 282-amino-acid chain: MTLLDGKALSAKIKEELKEKNQFLKSKGIESCLAVILVGDNPASQTYVKSKAKACEECGIKSLVYHLNENTTQNELLALINTLNHDDSVHGILVQLPLPDHICKDLILESIISSKDVDGFHPINVGYLNLGLESGFLPCTPLGVMKLLKAYEIDLEGKDAVIIGASNIVGRPMATMLLNAGATVSVCHIKTKDLSLYTRQADLIIVAAGCVNLLRSDMVKEGVIVVDVGINRLESGKIVGDVDFEEVSKKSSYITPVPGGVGPMTIAMLLENTVKSAKNRLN.

NADP(+) contacts are provided by residues 164–166 (GAS), Ile189, and Ile230.

Belongs to the tetrahydrofolate dehydrogenase/cyclohydrolase family. As to quaternary structure, homodimer.

It carries out the reaction (6R)-5,10-methylene-5,6,7,8-tetrahydrofolate + NADP(+) = (6R)-5,10-methenyltetrahydrofolate + NADPH. It catalyses the reaction (6R)-5,10-methenyltetrahydrofolate + H2O = (6R)-10-formyltetrahydrofolate + H(+). It functions in the pathway one-carbon metabolism; tetrahydrofolate interconversion. In terms of biological role, catalyzes the oxidation of 5,10-methylenetetrahydrofolate to 5,10-methenyltetrahydrofolate and then the hydrolysis of 5,10-methenyltetrahydrofolate to 10-formyltetrahydrofolate. In Campylobacter jejuni subsp. jejuni serotype O:6 (strain 81116 / NCTC 11828), this protein is Bifunctional protein FolD.